The sequence spans 313 residues: Glutathione S-transferase omega-like 2 (313 aa).

The active-site Nucleophile is the Cys-49. Residues 161-289 enclose the GST C-terminal domain; sequence PSSLRTKIDE…TDFKHIKCHY (129 aa).

This sequence belongs to the GST superfamily. Omega family.

The protein localises to the cytoplasm. The protein resides in the nucleus. It is found in the golgi apparatus. The enzyme catalyses RX + glutathione = an S-substituted glutathione + a halide anion + H(+). The catalysed reaction is L-dehydroascorbate + 2 glutathione = glutathione disulfide + L-ascorbate. In terms of biological role, active as '1-Cys' thiol transferase against beta-hydroxyethyl disulfide (HED), as dehydroascorbate reductase and as dimethylarsinic acid reductase, while not active against the standard GST substrate 1-chloro-2,4-dinitrobenzene (CDNB). May be involved in cell wall organization and biogenesis. In Schizosaccharomyces pombe (strain 972 / ATCC 24843) (Fission yeast), this protein is Glutathione S-transferase omega-like 2 (gto2).